A 304-amino-acid polypeptide reads, in one-letter code: Probable actin-related protein 2/3 complex subunit 2 (304 aa).

Belongs to the ARPC2 family. As to quaternary structure, component of the Arp2/3 complex.

Its subcellular location is the cytoplasm. The protein localises to the cytoskeleton. Functionally, functions as actin-binding component of the Arp2/3 complex which is involved in regulation of actin polymerization and together with an activating nucleation-promoting factor (NPF) mediates the formation of branched actin networks. Seems to contact the mother actin filament. The sequence is that of Probable actin-related protein 2/3 complex subunit 2 (Arc-p34) from Anopheles gambiae (African malaria mosquito).